The sequence spans 935 residues: Coiled-coil domain-containing protein 66 (935 aa).

Polar residues predominate over residues 76–96 (LDTSQAKPENSRLTFSPSTDK). A disordered region spans residues 76–103 (LDTSQAKPENSRLTFSPSTDKQYSEKDS). Phosphothreonine is present on threonine 114. At serine 366 the chain carries Phosphoserine. Positions 462–555 (LEHQKAIMAQ…EQRIRELAQK (94 aa)) form a coiled coil. Disordered regions lie at residues 470-491 (AQVE…KEEQ), 577-602 (TISS…DTGV), and 738-794 (ENLS…RTQQ). The segment covering 473–491 (EENRRKKRLEEEQRKKEEQ) has biased composition (basic and acidic residues). Positions 567 to 935 (GAQVDYKAFT…NQEDNFSSSF (369 aa)) are mediates localization to cilia, centrosomes and spindle microtubules and the interaction with PCM1, CEP290, CEP104 and CSPP1. Residues 590–602 (DTSTASPKKDTGV) are compositionally biased toward polar residues. Phosphoserine is present on serine 595. Residues 752-782 (SHRETESESRLHLIKKVEEPLKTPSVSKERF) are compositionally biased toward basic and acidic residues. The segment covering 783–794 (QTSPAVKNRTQQ) has biased composition (polar residues).

Homodimer; disulfide-linked. Interacts with CEP290. Interacts with PCM1. Interacts with ARMC9, TOGARAM1, CSPP1 and CEP104. Interacts with CDK5RAP2, CEP152, CEP192, TBG1 and PRC1. Widely expressed. Expressed in retina by rod photoreceptors but also detected in outer plexiform and ganglion cell layers (at protein level).

It is found in the cytoplasm. Its subcellular location is the cytoskeleton. The protein resides in the microtubule organizing center. It localises to the centrosome. The protein localises to the centriolar satellite. It is found in the cell projection. Its subcellular location is the cilium. The protein resides in the cilium basal body. It localises to the cilium axoneme. The protein localises to the photoreceptor inner segment. It is found in the photoreceptor outer segment. In terms of biological role, microtubule-binding protein required for ciliogenesis. May function in ciliogenesis by mediating the transport of proteins like BBS4 to the cilium, but also through the organization of the centriolar satellites. Required for the assembly of signaling-competent cilia with proper structure and length. Mediates this function in part by regulating transition zone assembly and basal body recruitment of the IFT-B complex. Cooperates with the ciliopathy proteins CSPP1 and CEP104 during cilium length regulation. Plays two important roles during cell division. First, is required for mitotic progression via regulation of spindle assembly, organization and orientation, levels of spindle microtubules (MTs), kinetochore-fiber integrity, and chromosome alignment. Second, functions during cytokinesis in part by regulating assembly and organization of central spindle and midbody MTs. Plays a role in retina morphogenesis and/or homeostasis. This chain is Coiled-coil domain-containing protein 66, found in Mus musculus (Mouse).